The chain runs to 361 residues: Probable G-protein coupled receptor 25 (361 aa).

The Extracellular portion of the chain corresponds to 1-39 (MAPTEPWSPSPGSAPWDYSGLDGLEELELCPAGDLPYGY). Residues 40-60 (VYIPALYLAAFAVGLLGNAFV) traverse the membrane as a helical segment. The Cytoplasmic segment spans residues 61-75 (VWLLAGRRGPRRLVD). Residues 76–96 (TFVLHLAAADLGFVLTLPLWA) form a helical membrane-spanning segment. Residues 97–126 (AAAALGGRWPFGDGLCKLSSFALAGTRCAG) lie on the Extracellular side of the membrane. A helical transmembrane segment spans residues 127-147 (ALLLAGMSVDRYLAVVKLLEA). The Cytoplasmic portion of the chain corresponds to 148 to 155 (RPLRTPRC). Residues 156–176 (ALASCCGVWAVALLAGLPSLV) traverse the membrane as a helical segment. The Extracellular portion of the chain corresponds to 177–200 (YRGLQPLPGGQDSQCGEEPSHAFQ). The helical transmembrane segment at 201–220 (GLSLLLLLLTFVLPLVVTLF) threads the bilayer. The Cytoplasmic segment spans residues 221-242 (CYCRISRRLRRPPHVGRARRNS). Residues 243 to 263 (LRIIFAIESTFVGSWLPFSAL) form a helical membrane-spanning segment. Topologically, residues 264–289 (RAVFHLARLGALPLPCPLLLALRWGL) are extracellular. A helical transmembrane segment spans residues 290 to 310 (TIATCLAFVNSCANPLIYLLL). Topologically, residues 311 to 361 (DRSFRARALDGACGRTGRLARRISSASSLSRDDSSVFRCRAQAANTASASW) are cytoplasmic.

The protein belongs to the G-protein coupled receptor 1 family.

The protein resides in the cell membrane. Orphan receptor. In Homo sapiens (Human), this protein is Probable G-protein coupled receptor 25 (GPR25).